Reading from the N-terminus, the 252-residue chain is tRNA (guanine-N(1)-)-methyltransferase (252 aa).

S-adenosyl-L-methionine-binding positions include Gly118 and 138 to 143 (IGDYVL).

Belongs to the RNA methyltransferase TrmD family. In terms of assembly, homodimer.

Its subcellular location is the cytoplasm. The catalysed reaction is guanosine(37) in tRNA + S-adenosyl-L-methionine = N(1)-methylguanosine(37) in tRNA + S-adenosyl-L-homocysteine + H(+). In terms of biological role, specifically methylates guanosine-37 in various tRNAs. This Pseudomonas aeruginosa (strain UCBPP-PA14) protein is tRNA (guanine-N(1)-)-methyltransferase.